The primary structure comprises 908 residues: Probable disease resistance RPP8-like protein 4 (908 aa).

The stretch at 15-57 (DLLSRESERLQGIDEQLDGLKRQLRSLQSLLKDADAKKHGSDR) forms a coiled coil. The 314-residue stretch at 146–459 (RQRVQREIRQ…AEGIYDGSTI (314 aa)) folds into the NB-ARC domain. Residue 192-199 (GMGGIGKT) participates in ATP binding. LRR repeat units lie at residues 575–599 (LTLLRVLDLSRVKFEGGKLPSSIGG), 600–623 (LIHLRYLSLYGAVVSHLPSTMRNL), and 842–867 (MPCLRTLTIHDCEKLKELPDGLKYIT).

The protein belongs to the disease resistance NB-LRR family. RPP8/HRT subfamily.

Potential disease resistance protein. The chain is Probable disease resistance RPP8-like protein 4 (RPP8L4) from Arabidopsis thaliana (Mouse-ear cress).